We begin with the raw amino-acid sequence, 227 residues long: UPF0173 metal-dependent hydrolase Bsph_4138 (227 aa).

This sequence belongs to the UPF0173 family.

The chain is UPF0173 metal-dependent hydrolase Bsph_4138 from Lysinibacillus sphaericus (strain C3-41).